A 320-amino-acid chain; its full sequence is Nucleotide-binding protein Acid_7395 (320 aa).

Positions 1–34 are disordered; the sequence is MPLRKKGAATTKAAATRKDSAKAPASSKRKDAPQ. 44-51 is an ATP binding site; it reads GLSGSGKG. 94–97 is a GTP binding site; the sequence is DIRE.

This sequence belongs to the RapZ-like family.

Functionally, displays ATPase and GTPase activities. The sequence is that of Nucleotide-binding protein Acid_7395 from Solibacter usitatus (strain Ellin6076).